A 112-amino-acid chain; its full sequence is Cytochrome c-551 (112 aa).

The N-terminal stretch at 1-20 (MKSKLSILMIGFALSVLLAA) is a signal peptide. A lipid anchor (N-palmitoyl cysteine) is attached at C21. Residue C21 is the site of S-diacylglycerol cysteine attachment. Positions 25-35 (DAKEEKTDTGS) are enriched in basic and acidic residues. The interval 25–44 (DAKEEKTDTGSKTEATASEG) is disordered. Residues 39–112 (ATASEGEELY…VIAKWLSEKK (74 aa)) form the Cytochrome c domain. 4 residues coordinate heme c: C52, C55, H56, and M91.

In terms of processing, binds 1 heme c group covalently per subunit.

It is found in the cell membrane. Functionally, electron carrier protein. This chain is Cytochrome c-551 (cccB), found in Bacillus subtilis (strain 168).